A 127-amino-acid chain; its full sequence is Large ribosomal subunit protein bL12 (127 aa).

2 positions are modified to N6-methyllysine: K77 and K88.

The protein belongs to the bacterial ribosomal protein bL12 family. Homodimer. Part of the ribosomal stalk of the 50S ribosomal subunit. Forms a multimeric L10(L12)X complex, where L10 forms an elongated spine to which 2 to 4 L12 dimers bind in a sequential fashion. Binds GTP-bound translation factors.

In terms of biological role, forms part of the ribosomal stalk which helps the ribosome interact with GTP-bound translation factors. Is thus essential for accurate translation. This is Large ribosomal subunit protein bL12 from Nitratidesulfovibrio vulgaris (strain DSM 19637 / Miyazaki F) (Desulfovibrio vulgaris).